The primary structure comprises 839 residues: Septin-interacting protein 1 (839 aa).

Residues 22 to 164 (INRPRGRQSR…ASERNVGAWE (143 aa)) are disordered. Ser-43 and Ser-47 each carry phosphoserine. Residue Thr-53 is modified to Phosphothreonine. Over residues 88–101 (LQADDEKGSQKEGA) the composition is skewed to basic and acidic residues. Over residues 102–111 (EADQGEESDD) the composition is skewed to acidic residues. A compositionally biased stretch (polar residues) spans 140–149 (SRKQPSTTFQ). The region spanning 167–213 (TRGIGAKLLLQMGYEPGKGLGKDLQGISHPVQAHVRKGRGAIGAYGP) is the G-patch domain. A coiled-coil region spans residues 363 to 411 (IDNQERECSSQQAALESEHRKLEEIVQLERNHIRTLEESLERVERLIDN).

This sequence belongs to the TFP11/STIP family. In terms of assembly, identified in the spliceosome C complex. Interacts with pnut.

The protein resides in the nucleus. Functionally, may be involved in pre-mRNA splicing. The sequence is that of Septin-interacting protein 1 (sip1) from Drosophila melanogaster (Fruit fly).